A 471-amino-acid polypeptide reads, in one-letter code: Glutamate--tRNA ligase 1 (471 aa).

The short motif at Pro15 to Gly25 is the 'HIGH' region element. A 'KMSKS' region motif is present at residues Lys243 to Arg247. Position 246 (Lys246) interacts with ATP.

It belongs to the class-I aminoacyl-tRNA synthetase family. Glutamate--tRNA ligase type 1 subfamily. As to quaternary structure, monomer.

It localises to the cytoplasm. It carries out the reaction tRNA(Glu) + L-glutamate + ATP = L-glutamyl-tRNA(Glu) + AMP + diphosphate. Its function is as follows. Catalyzes the attachment of glutamate to tRNA(Glu) in a two-step reaction: glutamate is first activated by ATP to form Glu-AMP and then transferred to the acceptor end of tRNA(Glu). The polypeptide is Glutamate--tRNA ligase 1 (Dinoroseobacter shibae (strain DSM 16493 / NCIMB 14021 / DFL 12)).